Consider the following 151-residue polypeptide: Acidic phospholipase A2 1 (151 aa).

Positions 1-21 are cleaved as a signal peptide; the sequence is MNPAHLLVLSAVCVSLLGASS. Positions 22–27 are excised as a propeptide; sequence IPPQPL. 7 disulfides stabilise this stretch: cysteine 38–cysteine 104, cysteine 54–cysteine 151, cysteine 56–cysteine 72, cysteine 71–cysteine 132, cysteine 78–cysteine 125, cysteine 88–cysteine 118, and cysteine 111–cysteine 123. 3 residues coordinate Ca(2+): tyrosine 55, glycine 57, and glycine 59. The active site involves histidine 75. Aspartate 76 contributes to the Ca(2+) binding site. Residue aspartate 126 is part of the active site.

Ca(2+) serves as cofactor. Expressed by the venom gland.

It is found in the secreted. The enzyme catalyses a 1,2-diacyl-sn-glycero-3-phosphocholine + H2O = a 1-acyl-sn-glycero-3-phosphocholine + a fatty acid + H(+). Its function is as follows. Snake venom phospholipase A2 (PLA2) that may exhibit cardiotoxicity, myotoxicity, antiplatelet activity, and edema-inducing activity. PLA2 catalyzes the calcium-dependent hydrolysis of the 2-acyl groups in 3-sn-phosphoglycerides. This chain is Acidic phospholipase A2 1, found in Ophiophagus hannah (King cobra).